Consider the following 690-residue polypeptide: Polyribonucleotide nucleotidyltransferase (690 aa).

Residues Asp-482 and Asp-488 each coordinate Mg(2+). Residues 549-608 (PRIITIQINPDRIRDVIGPGGKVIRALTEETGATIDIQDNGTVTIASVDGEAGAAAKRRI) enclose the KH domain. The region spanning 618-686 (DTIYDGKVAK…RQGKIKLSMK (69 aa)) is the S1 motif domain.

This sequence belongs to the polyribonucleotide nucleotidyltransferase family. Component of the RNA degradosome, which is a multiprotein complex involved in RNA processing and mRNA degradation. Mg(2+) serves as cofactor.

It is found in the cytoplasm. It catalyses the reaction RNA(n+1) + phosphate = RNA(n) + a ribonucleoside 5'-diphosphate. Involved in mRNA degradation. Catalyzes the phosphorolysis of single-stranded polyribonucleotides processively in the 3'- to 5'-direction. This Acidithiobacillus ferrooxidans (strain ATCC 23270 / DSM 14882 / CIP 104768 / NCIMB 8455) (Ferrobacillus ferrooxidans (strain ATCC 23270)) protein is Polyribonucleotide nucleotidyltransferase.